Consider the following 169-residue polypeptide: Large ribosomal subunit protein uL10 (169 aa).

The protein belongs to the universal ribosomal protein uL10 family. Part of the ribosomal stalk of the 50S ribosomal subunit. The N-terminus interacts with L11 and the large rRNA to form the base of the stalk. The C-terminus forms an elongated spine to which L12 dimers bind in a sequential fashion forming a multimeric L10(L12)X complex.

Forms part of the ribosomal stalk, playing a central role in the interaction of the ribosome with GTP-bound translation factors. This Rickettsia massiliae (strain Mtu5) protein is Large ribosomal subunit protein uL10.